The primary structure comprises 182 residues: MATLLLEDGTIESNLDEIARELAPLGVYIKHYDPGTSILFPHLLIQDALTDKEKCHIVDLHNSVFEFIQQENGYLWCDLLNVHPGSPNLQTLIATYAKYHTHTAPEALYVLAGEMIFGFVKPDGSQVQLLVQSQDYLHIPSGVEHWCSLTASLSFKAVRYFTAADGWVPNYTGTQLNDSLNK.

Histidine 100, histidine 102, glutamate 106, and histidine 145 together coordinate Fe(2+). Positions 100, 102, 106, and 145 each coordinate Ni(2+).

It belongs to the acireductone dioxygenase (ARD) family. Monomer. Fe(2+) is required as a cofactor. Ni(2+) serves as cofactor.

The catalysed reaction is 1,2-dihydroxy-5-(methylsulfanyl)pent-1-en-3-one + O2 = 3-(methylsulfanyl)propanoate + CO + formate + 2 H(+). It catalyses the reaction 1,2-dihydroxy-5-(methylsulfanyl)pent-1-en-3-one + O2 = 4-methylsulfanyl-2-oxobutanoate + formate + 2 H(+). Its pathway is amino-acid biosynthesis; L-methionine biosynthesis via salvage pathway; L-methionine from S-methyl-5-thio-alpha-D-ribose 1-phosphate: step 5/6. In terms of biological role, catalyzes 2 different reactions between oxygen and the acireductone 1,2-dihydroxy-3-keto-5-methylthiopentene (DHK-MTPene) depending upon the metal bound in the active site. Fe-containing acireductone dioxygenase (Fe-ARD) produces formate and 2-keto-4-methylthiobutyrate (KMTB), the alpha-ketoacid precursor of methionine in the methionine recycle pathway. Ni-containing acireductone dioxygenase (Ni-ARD) produces methylthiopropionate, carbon monoxide and formate, and does not lie on the methionine recycle pathway. The chain is Acireductone dioxygenase from Trichormus variabilis (strain ATCC 29413 / PCC 7937) (Anabaena variabilis).